The chain runs to 182 residues: uncharacterized protein (182 aa).

A run of 2 helical transmembrane segments spans residues L76–A96 and L114–A130.

The protein resides in the membrane. This is an uncharacterized protein from Saccharomyces cerevisiae (strain ATCC 204508 / S288c) (Baker's yeast).